We begin with the raw amino-acid sequence, 151 residues long: Small ribosomal subunit protein uS9 (151 aa).

Belongs to the universal ribosomal protein uS9 family.

This is Small ribosomal subunit protein uS9 (rps9) from Aeropyrum pernix (strain ATCC 700893 / DSM 11879 / JCM 9820 / NBRC 100138 / K1).